The primary structure comprises 184 residues: Photosystem I assembly protein Ycf4 (184 aa).

The next 2 helical transmembrane spans lie at 19–39 and 57–77; these read ISNF…LLVG and IIFF…LFIS.

The protein belongs to the Ycf4 family.

The protein resides in the plastid. Its subcellular location is the chloroplast thylakoid membrane. Seems to be required for the assembly of the photosystem I complex. This is Photosystem I assembly protein Ycf4 from Solanum bulbocastanum (Wild potato).